Here is a 53-residue protein sequence, read N- to C-terminus: Rubredoxin (53 aa).

The Rubredoxin-like domain maps to 1–53 (MQKFECTLCGYIYDPALVGPDTPDQDGAFEDVSENWVCPLCGAGKEDFEVYED). The Fe cation site is built by Cys-6, Cys-9, Cys-38, and Cys-41.

Belongs to the rubredoxin family. Requires Fe(3+) as cofactor.

Functionally, rubredoxin is a small nonheme, iron protein lacking acid-labile sulfide. Its single Fe, chelated to 4 Cys, functions as an electron acceptor and may also stabilize the conformation of the molecule. The polypeptide is Rubredoxin (Peptoniphilus asaccharolyticus (Peptostreptococcus asaccharolyticus)).